Reading from the N-terminus, the 240-residue chain is 6-phosphogluconolactonase (240 aa).

Belongs to the glucosamine/galactosamine-6-phosphate isomerase family. 6-phosphogluconolactonase subfamily.

It carries out the reaction 6-phospho-D-glucono-1,5-lactone + H2O = 6-phospho-D-gluconate + H(+). It functions in the pathway carbohydrate degradation; pentose phosphate pathway; D-ribulose 5-phosphate from D-glucose 6-phosphate (oxidative stage): step 2/3. Its function is as follows. Hydrolysis of 6-phosphogluconolactone to 6-phosphogluconate. In Nostoc sp. (strain PCC 7120 / SAG 25.82 / UTEX 2576), this protein is 6-phosphogluconolactonase (pgl).